A 446-amino-acid chain; its full sequence is MLKIILFLLFLTPVCFINNMYWMVQIMLFFISFIFLLMNNFMNYWSEISYFLGCDMLSYGLVLLSLWICSLMLLASESINKYNNYKNLFLLNIVILLLLLVLTFSSMSLFMFYLFFESSLIPTLFLILGWGYQPERLQAGVYLLFYTLLVSLPMLIGIFYVMNKTGSMNFYLMNNFMFNYDLLYFCLLCAFLVKMPMFLVHLWLPKAHVEAPVSGSMILAGIMLKLGGYGLLRVINFLQLMNLKYSFVWISISLVGGVLMSLVCLRQTDLKALIAYSSVAHMGIVLAGLLTMTYWGLCGSYTLMIAHGLCSSGLFCLANVSYERLGSRSMLINKGLLNFMPAMTLWWFLLSSANMAAPPTLNLLGEISLLNSIVSWSWISMIMLSFLSFFSAAYTLYLYSFSQHGKLFSGVYSFSSGKIREYLLMLLHWLPLNLLILKSESCILWL.

13 helical membrane passes run I4–V24, M56–S76, I93–Y113, L114–P134, V141–V161, L182–L202, P212–L232, Y245–L265, A272–M292, L297–L317, M330–L350, I373–A393, and L426–L446.

Belongs to the complex I subunit 4 family.

The protein resides in the mitochondrion membrane. The enzyme catalyses a ubiquinone + NADH + 5 H(+)(in) = a ubiquinol + NAD(+) + 4 H(+)(out). In terms of biological role, core subunit of the mitochondrial membrane respiratory chain NADH dehydrogenase (Complex I) that is believed to belong to the minimal assembly required for catalysis. Complex I functions in the transfer of electrons from NADH to the respiratory chain. The immediate electron acceptor for the enzyme is believed to be ubiquinone. The sequence is that of NADH-ubiquinone oxidoreductase chain 4 (mt:ND4) from Drosophila yakuba (Fruit fly).